Consider the following 217-residue polypeptide: Probable GTP-binding protein EngB (217 aa).

One can recognise an EngB-type G domain in the interval 40–217 (DVPEIAFAGR…RAAVLQDAMG (178 aa)). Residues 48 to 55 (GRSNVGKS), 75 to 79 (GRTQE), 95 to 98 (DMPG), 162 to 165 (TKAD), and 196 to 198 (TSS) contribute to the GTP site. 2 residues coordinate Mg(2+): S55 and T77.

It belongs to the TRAFAC class TrmE-Era-EngA-EngB-Septin-like GTPase superfamily. EngB GTPase family. Mg(2+) is required as a cofactor.

Functionally, necessary for normal cell division and for the maintenance of normal septation. The protein is Probable GTP-binding protein EngB of Novosphingobium aromaticivorans (strain ATCC 700278 / DSM 12444 / CCUG 56034 / CIP 105152 / NBRC 16084 / F199).